Consider the following 266-residue polypeptide: Phosphatidylserine decarboxylase proenzyme (266 aa).

Catalysis depends on charge relay system; for autoendoproteolytic cleavage activity residues aspartate 74, histidine 135, and serine 237. Residue serine 237 is the Schiff-base intermediate with substrate; via pyruvic acid; for decarboxylase activity of the active site. The residue at position 237 (serine 237) is a Pyruvic acid (Ser); by autocatalysis.

Belongs to the phosphatidylserine decarboxylase family. PSD-B subfamily. Prokaryotic type I sub-subfamily. As to quaternary structure, heterodimer of a large membrane-associated beta subunit and a small pyruvoyl-containing alpha subunit. It depends on pyruvate as a cofactor. Is synthesized initially as an inactive proenzyme. Formation of the active enzyme involves a self-maturation process in which the active site pyruvoyl group is generated from an internal serine residue via an autocatalytic post-translational modification. Two non-identical subunits are generated from the proenzyme in this reaction, and the pyruvate is formed at the N-terminus of the alpha chain, which is derived from the carboxyl end of the proenzyme. The autoendoproteolytic cleavage occurs by a canonical serine protease mechanism, in which the side chain hydroxyl group of the serine supplies its oxygen atom to form the C-terminus of the beta chain, while the remainder of the serine residue undergoes an oxidative deamination to produce ammonia and the pyruvoyl prosthetic group on the alpha chain. During this reaction, the Ser that is part of the protease active site of the proenzyme becomes the pyruvoyl prosthetic group, which constitutes an essential element of the active site of the mature decarboxylase.

It is found in the cell membrane. It catalyses the reaction a 1,2-diacyl-sn-glycero-3-phospho-L-serine + H(+) = a 1,2-diacyl-sn-glycero-3-phosphoethanolamine + CO2. Its pathway is phospholipid metabolism; phosphatidylethanolamine biosynthesis; phosphatidylethanolamine from CDP-diacylglycerol: step 2/2. Catalyzes the formation of phosphatidylethanolamine (PtdEtn) from phosphatidylserine (PtdSer). This chain is Phosphatidylserine decarboxylase proenzyme, found in Campylobacter jejuni subsp. jejuni serotype O:2 (strain ATCC 700819 / NCTC 11168).